The chain runs to 314 residues: L-lactate dehydrogenase 2 (314 aa).

Residues valine 16, aspartate 37, lysine 42, tyrosine 68, and 82–83 (GL) each bind NAD(+). Substrate-binding positions include glutamine 85, arginine 91, and 123–126 (NPVD). Residues 121-123 (ATN) and serine 146 contribute to the NAD(+) site. 151 to 154 (DSAR) is a substrate binding site. Arginine 156 and histidine 171 together coordinate beta-D-fructose 1,6-bisphosphate. Catalysis depends on histidine 178, which acts as the Proton acceptor. Tyrosine 223 is modified (phosphotyrosine). Threonine 232 contacts substrate.

Belongs to the LDH/MDH superfamily. LDH family. In terms of assembly, homotetramer.

It is found in the cytoplasm. It carries out the reaction (S)-lactate + NAD(+) = pyruvate + NADH + H(+). It participates in fermentation; pyruvate fermentation to lactate; (S)-lactate from pyruvate: step 1/1. Its activity is regulated as follows. Allosterically activated by fructose 1,6-bisphosphate (FBP). Catalyzes the conversion of lactate to pyruvate. The polypeptide is L-lactate dehydrogenase 2 (Bacillus cereus (strain ATCC 14579 / DSM 31 / CCUG 7414 / JCM 2152 / NBRC 15305 / NCIMB 9373 / NCTC 2599 / NRRL B-3711)).